Here is a 235-residue protein sequence, read N- to C-terminus: Octanoyltransferase (235 aa).

The region spanning 30-214 is the BPL/LPL catalytic domain; sequence NELEDTLLLL…YFGKVFGAKF (185 aa). Substrate contacts are provided by residues 75–82, 144–146, and 157–159; these read RGGDVTYH, AIG, and GFA. The active-site Acyl-thioester intermediate is cysteine 175.

The protein belongs to the LipB family.

It is found in the cytoplasm. The enzyme catalyses octanoyl-[ACP] + L-lysyl-[protein] = N(6)-octanoyl-L-lysyl-[protein] + holo-[ACP] + H(+). Its pathway is protein modification; protein lipoylation via endogenous pathway; protein N(6)-(lipoyl)lysine from octanoyl-[acyl-carrier-protein]: step 1/2. Its function is as follows. Catalyzes the transfer of endogenously produced octanoic acid from octanoyl-acyl-carrier-protein onto the lipoyl domains of lipoate-dependent enzymes. Lipoyl-ACP can also act as a substrate although octanoyl-ACP is likely to be the physiological substrate. This Caldicellulosiruptor saccharolyticus (strain ATCC 43494 / DSM 8903 / Tp8T 6331) protein is Octanoyltransferase.